Consider the following 390-residue polypeptide: MAVGIENTIEEARFVEQARNFDIQRVIVKIGSSLLTNNGRGLDRTAIYEWAKQIAQLHKQGVEVLLVSSGAVAEGVVRMNLEERPKKLAALQACASVGQMGLIETWWSALIQYGIQSSQLLLTHDDLSNRSRYLNTTGALTQLLEWRVLPVINENDTITIDEIKFGDNDTLGAMAAAMVNADLYIILTDQEGVFTDNPRNNPHARMIRQERAMADYLFDIAGDGGKLGRGGMLTKIRAGRLAAMGGCPTVIVSGAIDDVITRVVSGEAVGTLLTTNDQDKIIARKQWLAAHLRMSGSLIVDAGAAKAVVEHQKSLLPVGVSEVRGDFDEGDVVEIVHQDTGERIAVGQVNFSSRDACRVARERTEQFDRILGNNEERVVMVHRDNLALTM.

Lys29 serves as a coordination point for ATP. Substrate is bound by residues Ser69, Asp156, and Asn168. ATP is bound at residue 188–189 (TD). The PUA domain maps to 295–374 (SGSLIVDAGA…EQFDRILGNN (80 aa)).

The protein belongs to the glutamate 5-kinase family.

The protein resides in the cytoplasm. The catalysed reaction is L-glutamate + ATP = L-glutamyl 5-phosphate + ADP. It participates in amino-acid biosynthesis; L-proline biosynthesis; L-glutamate 5-semialdehyde from L-glutamate: step 1/2. Its function is as follows. Catalyzes the transfer of a phosphate group to glutamate to form L-glutamate 5-phosphate. The protein is Glutamate 5-kinase of Psychrobacter cryohalolentis (strain ATCC BAA-1226 / DSM 17306 / VKM B-2378 / K5).